A 450-amino-acid chain; its full sequence is Protein DA1-related 3 (450 aa).

Residues 1 to 46 adopt a coiled-coil conformation; the sequence is MVRRKRQEEDEKIEIERVKEESLKLAKQAEEKRRLEESKEQGKRIQ. 2 stretches are compositionally biased toward basic and acidic residues: residues 27–47 and 56–69; these read KQAE…RIQV and TSKD…SKDV. The segment at 27–87 is disordered; the sequence is KQAEEKRRLE…PSIDGKSEIG (61 aa).

This is Protein DA1-related 3 (DAR3) from Arabidopsis thaliana (Mouse-ear cress).